The following is a 296-amino-acid chain: Acetylglutamate kinase (296 aa).

Residues 71 to 72, R93, and N186 each bind substrate; that span reads GG.

This sequence belongs to the acetylglutamate kinase family. ArgB subfamily.

It localises to the cytoplasm. The enzyme catalyses N-acetyl-L-glutamate + ATP = N-acetyl-L-glutamyl 5-phosphate + ADP. It participates in amino-acid biosynthesis; L-arginine biosynthesis; N(2)-acetyl-L-ornithine from L-glutamate: step 2/4. Its function is as follows. Catalyzes the ATP-dependent phosphorylation of N-acetyl-L-glutamate. The chain is Acetylglutamate kinase from Synechococcus sp. (strain RCC307).